The sequence spans 1295 residues: Phosphoribosylformylglycinamidine synthase (1295 aa).

ATP is bound by residues 305-316 (GAATGSGGEIRD), 384-386 (TGY), and A676. The Mg(2+) site is built by D677, E716, N720, and D884. S886 provides a ligand contact to ATP. The Glutamine amidotransferase type-1 domain occupies 1042 to 1295 (VAILREQGVN…MFRNARKHLG (254 aa)). C1135 functions as the Nucleophile in the catalytic mechanism. Catalysis depends on residues H1260 and E1262.

It in the N-terminal section; belongs to the FGAMS family. As to quaternary structure, monomer.

The protein localises to the cytoplasm. The catalysed reaction is N(2)-formyl-N(1)-(5-phospho-beta-D-ribosyl)glycinamide + L-glutamine + ATP + H2O = 2-formamido-N(1)-(5-O-phospho-beta-D-ribosyl)acetamidine + L-glutamate + ADP + phosphate + H(+). Its pathway is purine metabolism; IMP biosynthesis via de novo pathway; 5-amino-1-(5-phospho-D-ribosyl)imidazole from N(2)-formyl-N(1)-(5-phospho-D-ribosyl)glycinamide: step 1/2. Functionally, phosphoribosylformylglycinamidine synthase involved in the purines biosynthetic pathway. Catalyzes the ATP-dependent conversion of formylglycinamide ribonucleotide (FGAR) and glutamine to yield formylglycinamidine ribonucleotide (FGAM) and glutamate. The chain is Phosphoribosylformylglycinamidine synthase from Idiomarina loihiensis (strain ATCC BAA-735 / DSM 15497 / L2-TR).